A 485-amino-acid polypeptide reads, in one-letter code: NADH-quinone oxidoreductase subunit N (485 aa).

Transmembrane regions (helical) follow at residues 8-28, 35-55, 71-91, 105-125, 127-147, 159-179, 203-223, 235-255, 271-291, 297-317, 326-346, 373-393, 408-430, and 455-475; these read LIAL…MLSI, FLNA…LWFV, GFAM…CTFA, FYLL…ANHL, SLFL…GYAF, YTIL…LVYA, LLAG…LVPF, PAPV…GVVM, VVLA…ALSQ, LLGY…IALQ, VGVY…VVSL, AAVM…LGFI, WWLV…RVAV, and IVVL…QPLI.

Belongs to the complex I subunit 2 family. NDH-1 is composed of 13 different subunits. Subunits NuoA, H, J, K, L, M, N constitute the membrane sector of the complex.

The protein localises to the cell inner membrane. The catalysed reaction is a quinone + NADH + 5 H(+)(in) = a quinol + NAD(+) + 4 H(+)(out). NDH-1 shuttles electrons from NADH, via FMN and iron-sulfur (Fe-S) centers, to quinones in the respiratory chain. The immediate electron acceptor for the enzyme in this species is believed to be ubiquinone. Couples the redox reaction to proton translocation (for every two electrons transferred, four hydrogen ions are translocated across the cytoplasmic membrane), and thus conserves the redox energy in a proton gradient. This chain is NADH-quinone oxidoreductase subunit N, found in Escherichia coli (strain ATCC 8739 / DSM 1576 / NBRC 3972 / NCIMB 8545 / WDCM 00012 / Crooks).